The chain runs to 777 residues: Glucocorticoid receptor (777 aa).

Residues 1 to 14 show a composition bias toward basic and acidic residues; the sequence is MDSKESLTPGKEEN. The interval 1-23 is disordered; it reads MDSKESLTPGKEENPSSVLTQER. Residues 1–420 are modulating; it reads MDSKESLTPG…TATTGPPPKL (420 aa). T8 is subject to Phosphothreonine. R23 carries the omega-N-methylarginine modification. S45, S113, S134, and S141 each carry phosphoserine. Positions 130–182 are disordered; the sequence is NRSTSVPENPKSSASSSVSAAPKEKEFPKTHSDVSSEQQNLKGQTGTNGGNVK. A compositionally biased stretch (low complexity) spans 134–150; the sequence is SVPENPKSSASSSVSAA. The segment covering 151–163 has biased composition (basic and acidic residues); sequence PKEKEFPKTHSDV. Polar residues predominate over residues 164–174; it reads SSEQQNLKGQT. Phosphoserine is present on residues S203, S211, and S226. A Glycyl lysine isopeptide (Lys-Gly) (interchain with G-Cter in SUMO2) cross-link involves residue K258. The residue at position 267 (S267) is a Phosphoserine. Glycyl lysine isopeptide (Lys-Gly) (interchain with G-Cter in SUMO); alternate cross-links involve residues K277 and K293. Residues K277 and K293 each participate in a glycyl lysine isopeptide (Lys-Gly) (interchain with G-Cter in SUMO2); alternate cross-link. A compositionally biased stretch (low complexity) spans 394-414; that stretch reads SSPSMRPDVSSPPSSSSTATT. Residues 394 to 415 are disordered; sequence SSPSMRPDVSSPPSSSSTATTG. S404 is subject to Phosphoserine. Residue K419 forms a Glycyl lysine isopeptide (Lys-Gly) (interchain with G-Cter in ubiquitin) linkage. NR C4-type zinc fingers lie at residues 421–441 and 457–481; these read CLVC…CGSC and CAGR…YRKC. Positions 421–486 form a DNA-binding region, nuclear receptor; it reads CLVCSDEASG…RYRKCLQAGM (66 aa). N6-acetyllysine occurs at positions 480, 492, 494, and 495. The tract at residues 485-777 is interaction with CLOCK; sequence GMNLEARKTK…NIKKLLFHQK (293 aa). The hinge stretch occupies residues 487 to 523; that stretch reads NLEARKTKKKIKGIQQATTGVSQETSENPANKTIVPA. Residues 524-758 enclose the NR LBD domain; sequence TLPQLTPTLV…FPEMLAEIIT (235 aa). The tract at residues 532 to 697 is interaction with CRY1; sequence LVSLLEVIEP…EIRMTYIKEL (166 aa). K703 participates in a covalent cross-link: Glycyl lysine isopeptide (Lys-Gly) (interchain with G-Cter in SUMO).

This sequence belongs to the nuclear hormone receptor family. NR3 subfamily. Heteromultimeric cytoplasmic complex with HSP90AA1, HSPA1A/HSPA1B, and FKBP5 or another immunophilin such as PPID, STIP1, or the immunophilin homolog PPP5C. Upon ligand binding FKBP5 dissociates from the complex and FKBP4 takes its place, thereby linking the complex to dynein and mediating transport to the nucleus, where the complex dissociates. Probably forms a complex composed of chaperones HSP90 and HSP70, co-chaperones CDC37, PPP5C, TSC1 and client protein TSC2, CDK4, AKT, RAF1 and NR3C1; this complex does not contain co-chaperones STIP1/HOP and PTGES3/p23. Directly interacts with UNC45A. Binds to DNA as a homodimer, and as heterodimer with NR3C2 or the retinoid X receptor. Binds STAT5A and STAT5B homodimers and heterodimers. Interacts with NRIP1, POU2F1, POU2F2 and TRIM28. Interacts with several coactivator complexes, including the SMARCA4 complex, CREBBP/EP300, TADA2L (Ada complex) and p160 coactivators such as NCOA2 and NCOA6. Interaction with BAG1 inhibits transactivation. Interacts with HEXIM1 and TGFB1I1. Interacts with NCOA1. Interacts with NCOA3, SMARCA4, SMARCC1, SMARCD1, and SMARCE1. Interacts with CLOCK, CRY1 and CRY2 in a ligand-dependent fashion. Interacts with CIART. Interacts with RWDD3. Interacts with UBE2I/UBC9 and this interaction is enhanced in the presence of RWDD3. Interacts with GRIP1. Interacts with NR4A3 (via nuclear receptor DNA-binding domain), represses transcription activity of NR4A3 on the POMC promoter Nur response element (NurRE). Directly interacts with PNRC2 to attract and form a complex with UPF1 and DCP1A; the interaction leads to rapid mRNA degradation. Interacts with GSK3B. Interacts with FNIP1 and FNIP2. Interacts (via C-terminus) with HNRNPU (via C-terminus). Interacts with MCM3AP. Interacts (via domain NR LBD) with HSP90AA1 and HSP90AB1. In the absence of hormonal ligand, interacts with TACC1. Interacts (via NR LBD domain) with ZNF764 (via KRAB domain); the interaction regulates transcription factor activity of NR3C1 by directing its actions toward certain biologic pathways. In terms of processing, acetylation by CLOCK reduces its binding to glucocorticoid response elements and its transcriptional activity. Increased proteasome-mediated degradation in response to glucocorticoids. Post-translationally, phosphorylated in the absence of hormone; becomes hyperphosphorylated in the presence of glucocorticoid. The Ser-203, Ser-226 and Ser-404-phosphorylated forms are mainly cytoplasmic, and the Ser-211-phosphorylated form is nuclear. Phosphorylation at Ser-211 increases transcriptional activity. Phosphorylation at Ser-203, Ser-226 and Ser-404 decreases signaling capacity. Phosphorylation at Ser-404 may protect from glucocorticoid-induced apoptosis. Phosphorylation at Ser-203 and Ser-211 is not required in regulation of chromosome segregation. May be dephosphorylated by PPP5C, attenuates NR3C1 action. In terms of processing, ubiquitinated by UBR5, leading to its degradation: UBR5 specifically recognizes and binds ligand-bound NR3C1 when it is not associated with coactivators (NCOAs). In presence of NCOAs, the UBR5-degron is not accessible, preventing its ubiquitination and degradation. Sumoylation at Lys-277 and Lys-293 negatively regulates its transcriptional activity. Sumoylation at Lys-703 positively regulates its transcriptional activity in the presence of RWDD3. Sumoylation at Lys-277 and Lys-293 is dispensable whereas sumoylation at Lys-703 is critical for the stimulatory effect of RWDD3 on its transcriptional activity. Heat shock increases sumoylation in a RWWD3-dependent manner.

It is found in the cytoplasm. Its subcellular location is the nucleus. The protein localises to the mitochondrion. The protein resides in the cytoskeleton. It localises to the spindle. It is found in the microtubule organizing center. Its subcellular location is the centrosome. The protein localises to the chromosome. The protein resides in the nucleoplasm. In terms of biological role, receptor for glucocorticoids (GC). Has a dual mode of action: as a transcription factor that binds to glucocorticoid response elements (GRE), both for nuclear and mitochondrial DNA, and as a modulator of other transcription factors. Affects inflammatory responses, cellular proliferation and differentiation in target tissues. Involved in chromatin remodeling. Plays a role in rapid mRNA degradation by binding to the 5' UTR of target mRNAs and interacting with PNRC2 in a ligand-dependent manner which recruits the RNA helicase UPF1 and the mRNA-decapping enzyme DCP1A, leading to RNA decay. Could act as a coactivator for STAT5-dependent transcription upon growth hormone (GH) stimulation and could reveal an essential role of hepatic GR in the control of body growth. Mediates glucocorticoid-induced apoptosis. Promotes accurate chromosome segregation during mitosis. May act as a tumor suppressor. May play a negative role in adipogenesis through the regulation of lipolytic and antilipogenic gene expression. The protein is Glucocorticoid receptor (NR3C1) of Aotus nancymaae (Ma's night monkey).